A 410-amino-acid polypeptide reads, in one-letter code: Cysteine desulfurase IscS (410 aa).

Residues 79 to 80 (AT), N159, Q187, and 207 to 209 (SGH) contribute to the pyridoxal 5'-phosphate site. An N6-(pyridoxal phosphate)lysine modification is found at K210. T248 serves as a coordination point for pyridoxal 5'-phosphate. The Cysteine persulfide intermediate role is filled by C334. C334 provides a ligand contact to [2Fe-2S] cluster.

The protein belongs to the class-V pyridoxal-phosphate-dependent aminotransferase family. NifS/IscS subfamily. As to quaternary structure, homodimer. Forms a heterotetramer with IscU, interacts with other sulfur acceptors. It depends on pyridoxal 5'-phosphate as a cofactor.

The protein resides in the cytoplasm. The enzyme catalyses (sulfur carrier)-H + L-cysteine = (sulfur carrier)-SH + L-alanine. It functions in the pathway cofactor biosynthesis; iron-sulfur cluster biosynthesis. Its function is as follows. Master enzyme that delivers sulfur to a number of partners involved in Fe-S cluster assembly, tRNA modification or cofactor biosynthesis. Catalyzes the removal of elemental sulfur atoms from cysteine to produce alanine. Functions as a sulfur delivery protein for Fe-S cluster synthesis onto IscU, an Fe-S scaffold assembly protein, as well as other S acceptor proteins. The polypeptide is Cysteine desulfurase IscS (Ehrlichia chaffeensis (strain ATCC CRL-10679 / Arkansas)).